We begin with the raw amino-acid sequence, 694 residues long: Two-component response regulator ORR25 (694 aa).

Residues R17–W132 enclose the Response regulatory domain. The residue at position 68 (D68) is a 4-aspartylphosphate. Residues T183 to K242 enclose the HTH myb-type domain. The segment at residues P213–R238 is a DNA-binding region (H-T-H motif). The disordered stretch occupies residues V326–K349. Positions G333–A347 are enriched in polar residues.

The protein belongs to the ARR family. Type-B subfamily. Post-translationally, two-component system major event consists of a His-to-Asp phosphorelay between a sensor histidine kinase (HK) and a response regulator (RR). In plants, the His-to-Asp phosphorelay involves an additional intermediate named Histidine-containing phosphotransfer protein (HPt). This multistep phosphorelay consists of a His-Asp-His-Asp sequential transfer of a phosphate group between first a His and an Asp of the HK protein, followed by the transfer to a conserved His of the HPt protein and finally the transfer to an Asp in the receiver domain of the RR protein.

The protein localises to the nucleus. Functionally, transcriptional activator that binds specific DNA sequence. Functions as a response regulator involved in His-to-Asp phosphorelay signal transduction system. Phosphorylation of the Asp residue in the receiver domain activates the ability of the protein to promote the transcription of target genes. May directly activate some type-A response regulators in response to cytokinins. The polypeptide is Two-component response regulator ORR25 (Oryza sativa subsp. japonica (Rice)).